The following is a 224-amino-acid chain: Deoxyribose-phosphate aldolase (224 aa).

D92 serves as the catalytic Proton donor/acceptor. Catalysis depends on K155, which acts as the Schiff-base intermediate with acetaldehyde. Catalysis depends on K184, which acts as the Proton donor/acceptor.

This sequence belongs to the DeoC/FbaB aldolase family. DeoC type 1 subfamily.

It localises to the cytoplasm. It carries out the reaction 2-deoxy-D-ribose 5-phosphate = D-glyceraldehyde 3-phosphate + acetaldehyde. Its pathway is carbohydrate degradation; 2-deoxy-D-ribose 1-phosphate degradation; D-glyceraldehyde 3-phosphate and acetaldehyde from 2-deoxy-alpha-D-ribose 1-phosphate: step 2/2. Functionally, catalyzes a reversible aldol reaction between acetaldehyde and D-glyceraldehyde 3-phosphate to generate 2-deoxy-D-ribose 5-phosphate. The protein is Deoxyribose-phosphate aldolase of Clostridium perfringens (strain SM101 / Type A).